The primary structure comprises 440 residues: GTPase Der (440 aa).

2 consecutive EngA-type G domains span residues 4–168 and 177–352; these read PVVA…PPEK and IKIA…GRHS. GTP is bound by residues 10 to 17, 57 to 61, 120 to 123, 183 to 190, 230 to 234, and 295 to 298; these read GRPNVGKS, DTGGL, NKVE, DTAGM, and NKWD. The KH-like domain occupies 353–437; that stretch reads MRISTPGLNA…PIRFVLRKKT (85 aa).

Belongs to the TRAFAC class TrmE-Era-EngA-EngB-Septin-like GTPase superfamily. EngA (Der) GTPase family. In terms of assembly, associates with the 50S ribosomal subunit.

Functionally, GTPase that plays an essential role in the late steps of ribosome biogenesis. This Pelotomaculum thermopropionicum (strain DSM 13744 / JCM 10971 / SI) protein is GTPase Der.